We begin with the raw amino-acid sequence, 128 residues long: Protein ApaG (128 aa).

Residues 1 to 123 (MTSSPDITVS…FRLDIAPESG (123 aa)) enclose the ApaG domain.

The chain is Protein ApaG from Deinococcus radiodurans (strain ATCC 13939 / DSM 20539 / JCM 16871 / CCUG 27074 / LMG 4051 / NBRC 15346 / NCIMB 9279 / VKM B-1422 / R1).